The following is a 263-amino-acid chain: MSGEQTPMCSMDLREIKGKETNMADSYHGMSWYEQYIQPCVVELLGSALFIFIGCLSVIENSPNTGLLQPALAHGLALGLIIATLGNISGGHFNPAVSLAVTLVGGLKTMLLIPYWVSQLFGGMIGAALAKVVSPEERFWNASGAAFAIVQEQEQVAEALGVEIVMTMLLVLAVCMGAVNEKTMGPLAPFSIGFSVIVDILAGGGISGACMNPARAFGPAVMAGYWDFHWIYWLGPLLAGLFVGLLIRLFIGDEKTRLILKSR.

The Cytoplasmic segment spans residues 1–38 (MSGEQTPMCSMDLREIKGKETNMADSYHGMSWYEQYIQ). The chain crosses the membrane as a helical span at residues 39-59 (PCVVELLGSALFIFIGCLSVI). The residue at position 55 (Cys55) is a Cysteine persulfide. Cys55 carries the post-translational modification Cysteine sulfenic acid (-SOH). The Extracellular segment spans residues 60-86 (ENSPNTGLLQPALAHGLALGLIIATLG). The chain crosses the membrane as a helical span at residues 87 to 107 (NISGGHFNPAVSLAVTLVGGL). The short motif at 94–96 (NPA) is the NPA 1 element. At 108 to 109 (KT) the chain is on the cytoplasmic side. The chain crosses the membrane as a helical span at residues 110–130 (MLLIPYWVSQLFGGMIGAALA). Topologically, residues 131–158 (KVVSPEERFWNASGAAFAIVQEQEQVAE) are extracellular. An N-linked (GlcNAc...) asparagine glycan is attached at Asn141. A helical membrane pass occupies residues 159–179 (ALGVEIVMTMLLVLAVCMGAV). Residues 180-185 (NEKTMG) are Cytoplasmic-facing. Residues 186-206 (PLAPFSIGFSVIVDILAGGGI) traverse the membrane as a helical segment. The Extracellular segment spans residues 207-230 (SGACMNPARAFGPAVMAGYWDFHW). An NPA 2 motif is present at residues 212–214 (NPA). A helical membrane pass occupies residues 231–251 (IYWLGPLLAGLFVGLLIRLFI). Residues 252-263 (GDEKTRLILKSR) lie on the Cytoplasmic side of the membrane.

This sequence belongs to the MIP/aquaporin (TC 1.A.8) family. In terms of processing, N-glycosylated. Sulfenylation at Cys-55(C55-SOH) when hydrogen peroxide flows through the AQP8 channel, making it susceptible to hydrogen sulfide produced by CBS. Post-translationally, persulfidation at Cys-55 is required to gate AQP8 channel; under stress condition, hydrogen peroxide accumulates in the cell leading to CBS activation that produces hydrogen sulfide inducing persulfidation of oxidized Cys-55 (C55-SOH). In terms of tissue distribution, highly expressed in sperm, pancreas and liver. Expressed in hepatocytes, acinal cells of pancreas and salivary gland, and absorptive colonic epithelial cells. Expressed in the myoepithelium of submandibular and parotid glands. Expressed in pancreatic beta-cells. Expressed in testis but not in epididymis. Expressed in small intestine.

The protein resides in the cell membrane. Its subcellular location is the mitochondrion inner membrane. It is found in the apical cell membrane. The protein localises to the basolateral cell membrane. It localises to the smooth endoplasmic reticulum membrane. The catalysed reaction is H2O(in) = H2O(out). The enzyme catalyses NH4(+)(in) = NH4(+)(out). It carries out the reaction H2O2(out) = H2O2(in). It catalyses the reaction formamide(out) = formamide(in). The catalysed reaction is methylamine(out) = methylamine(in). Its activity is regulated as follows. Reversibly gated by a two-step sulfenylation-persulfidation process in cells undergoing diverse stresses. In terms of biological role, channel that allows the facilitated permeation of water and uncharged molecules, such as hydrogen peroxide and the neutral form of ammonia (NH3), through cellular membranes such as plasma membrane, inner mitochondrial membrane and endoplasmic reticulum membrane of several tissues. The transport of ammonia neutral form induces a parallel transport of proton, at alkaline pH when the concentration of ammonia is high. However, it is unclear whether the transport of proton takes place via the aquaporin or via an endogenous pathway. Also, may transport ammonia analogs such as formamide and methylamine, a transport favourited at basic pH due to the increase of unprotonated (neutral) form, which is expected to favor diffusion. Does not transport urea or glycerol. The water transport mechanism is mercury- and copper-sensitive and passive in response to osmotic driving forces. At the canicular plasma membrane, mediates the osmotic transport of water toward the bile canaliculus and facilitates the cAMP-induced bile canalicular water secretion, a process involved in bile formation. In addition, mediates the hydrogen peroxide release from hepatocyte mitochondria that modulates the SREBF2-mediated cholesterol synthesis and facilitates the mitochondrial ammonia uptake which is metabolized into urea, mainly under glucagon stimulation. In B cells, transports the CYBB-generated hydrogen peroxide from the external leaflet of the plasma membrane to the cytosol to promote B cell activation and differentiation for signal amplification. In the small intestine and colon system, mediates water transport through mitochondria and apical membrane of epithelial cells. May play an important role in the adaptive response of proximal tubule cells to acidosis possibly facilitating mitochondrial ammonia transport. In Rattus norvegicus (Rat), this protein is Aquaporin-8.